The following is a 171-amino-acid chain: MQQSSYTFDELLACGRGEMFGPGNAQLPAPPMLMFDRIVRIESDGGKYGKGYVEAEFDINPDLWFFACHFIGDPVMPGCLGLDAMWQLVGFFLGWSGGPGRGRALGVGEVKFTGQVTPDVKRVTYKIDLKRVIMRKLVMGIADGVVEADGKPIYEAKDLKVGLFTAEQMAS.

His-69 is an active-site residue.

This sequence belongs to the thioester dehydratase family. FabA subfamily. In terms of assembly, homodimer.

Its subcellular location is the cytoplasm. The enzyme catalyses a (3R)-hydroxyacyl-[ACP] = a (2E)-enoyl-[ACP] + H2O. It carries out the reaction (3R)-hydroxydecanoyl-[ACP] = (2E)-decenoyl-[ACP] + H2O. It catalyses the reaction (2E)-decenoyl-[ACP] = (3Z)-decenoyl-[ACP]. It participates in lipid metabolism; fatty acid biosynthesis. In terms of biological role, necessary for the introduction of cis unsaturation into fatty acids. Catalyzes the dehydration of (3R)-3-hydroxydecanoyl-ACP to E-(2)-decenoyl-ACP and then its isomerization to Z-(3)-decenoyl-ACP. Can catalyze the dehydratase reaction for beta-hydroxyacyl-ACPs with saturated chain lengths up to 16:0, being most active on intermediate chain length. The chain is 3-hydroxydecanoyl-[acyl-carrier-protein] dehydratase from Caulobacter sp. (strain K31).